Here is a 309-residue protein sequence, read N- to C-terminus: RHOMBOID-like protein 5 (309 aa).

A run of 7 helical transmembrane segments spans residues 27–47 (IPVP…FVTF), 113–133 (IWLH…MCIG), 140–160 (FGFM…SLVS), 170–190 (VSVG…SELI), 200–220 (CTAL…GFLP), 222–242 (VDNS…FVLL), and 274–294 (IFRF…YTKL). The active-site Nucleophile is the S175. Residue H227 is the Charge relay system of the active site.

It belongs to the peptidase S54 family.

The protein resides in the membrane. It carries out the reaction Cleaves type-1 transmembrane domains using a catalytic dyad composed of serine and histidine that are contributed by different transmembrane domains.. Its function is as follows. Probable rhomboid-type serine protease that catalyzes intramembrane proteolysis. May function in reproductive organs maturation. This is RHOMBOID-like protein 5 from Arabidopsis thaliana (Mouse-ear cress).